Reading from the N-terminus, the 484-residue chain is Zinc metalloproteinase-disintegrin jerdonitin (484 aa).

A signal peptide spans 1–20; it reads MIQVLLVTICLAVFPYQGSS. Positions 21-191 are excised as a propeptide; the sequence is IILESGNIDD…KLSQIMIPPE (171 aa). Residue Gln-192 is modified to Pyrrolidone carboxylic acid. A Peptidase M12B domain is found at 194 to 392; the sequence is RYIELVIVAD…FTSRCLYNEP (199 aa). Residues Glu-197 and Asp-281 each contribute to the Ca(2+) site. Cystine bridges form between Cys-305-Cys-387, Cys-345-Cys-369, and Cys-347-Cys-352. His-330 lines the Zn(2+) pocket. Residue Glu-331 is part of the active site. Positions 334 and 340 each coordinate Zn(2+). Ca(2+)-binding residues include Cys-387, Asn-390, Val-402, Asn-405, Glu-409, Glu-412, and Asp-415. One can recognise a Disintegrin domain in the interval 400-484; sequence PSVCGNYYME…AGCPRNPFHA (85 aa). 7 disulfide bridges follow: Cys-403/Cys-422, Cys-414/Cys-432, Cys-416/Cys-427, Cys-426/Cys-449, Cys-440/Cys-446, Cys-445/Cys-470, and Cys-458/Cys-477. The short motif at 462–464 is the Cell attachment site element; sequence RGD.

This sequence belongs to the venom metalloproteinase (M12B) family. P-II subfamily. P-IIb sub-subfamily. As to quaternary structure, monomer. The cofactor is Zn(2+). Post-translationally, the N-terminus is blocked. As to expression, expressed by the venom gland.

Its subcellular location is the secreted. Fibrinogenolytic activity is completely inhibited by EDTA, but not by PMSF. Its function is as follows. Snake venom zinc metalloproteinase that inhibits ADP-induced human platelet aggregation (IC(50)=120 nM (native) and IC(50)=248 nM (recombinant)). May act by binding to the receptor GPIIb/GPIIIa (ITGA2B/ITGB3) on the platelet surface. Degrades the alpha-chain of fibrinogen completely and the beta-chain partially, leaving the gamma chain intact. Also inhibits the growth of several cell lines, including human liver cancer cells (Bel7402), human leukemia cells (K562) and human gastric carcinoma cells (BGC823). The sequence is that of Zinc metalloproteinase-disintegrin jerdonitin from Protobothrops jerdonii (Jerdon's pitviper).